The chain runs to 419 residues: DNA ligase (419 aa).

Positions 1-120 are NTD; the sequence is MLNHFPGHCS…ARQKRGAHTN (120 aa). The tract at residues 121 to 317 is AD domain; it reads TGMIPPMLVK…NYHSAHLAKL (197 aa). Residue Lys-151 is the N6-AMP-lysine intermediate of the active site. Residues 318–419 are OB domain; it reads KPLLDAEFIL…REPINVLEII (102 aa).

The protein belongs to the ATP-dependent DNA ligase family.

It localises to the virion. It carries out the reaction ATP + (deoxyribonucleotide)n-3'-hydroxyl + 5'-phospho-(deoxyribonucleotide)m = (deoxyribonucleotide)n+m + AMP + diphosphate.. Its function is as follows. Very low-fidelity DNA ligase that seals nicks in double-stranded DNA during DNA repair. Together with the viral repair DNA polymerase X, fills the single nucleotide gaps generated by the AP endonuclease. It is not essential for viral replication and recombination. Displays a very low adenylation activity towards DNA with 3'-dideoxy- or 3'-amino-terminated nicks compared to regular nick DNA. This chain is DNA ligase, found in Ornithodoros (relapsing fever ticks).